We begin with the raw amino-acid sequence, 319 residues long: Beta-ketoacyl-[acyl-carrier-protein] synthase III (319 aa).

Catalysis depends on residues cysteine 113 and histidine 246. The ACP-binding stretch occupies residues 247-251; the sequence is QANIR. The active site involves asparagine 276.

The protein belongs to the thiolase-like superfamily. FabH family. Homodimer.

The protein localises to the cytoplasm. It catalyses the reaction malonyl-[ACP] + acetyl-CoA + H(+) = 3-oxobutanoyl-[ACP] + CO2 + CoA. It functions in the pathway lipid metabolism; fatty acid biosynthesis. Functionally, catalyzes the condensation reaction of fatty acid synthesis by the addition to an acyl acceptor of two carbons from malonyl-ACP. Catalyzes the first condensation reaction which initiates fatty acid synthesis and may therefore play a role in governing the total rate of fatty acid production. Possesses both acetoacetyl-ACP synthase and acetyl transacylase activities. Its substrate specificity determines the biosynthesis of branched-chain and/or straight-chain of fatty acids. This chain is Beta-ketoacyl-[acyl-carrier-protein] synthase III, found in Ehrlichia ruminantium (strain Welgevonden).